We begin with the raw amino-acid sequence, 130 residues long: Small ribosomal subunit protein uS9 (130 aa).

Residues 102-130 are disordered; sequence GLLTRDSRMKERKKPGLKGARRAPQFSKR. Residues 111–130 show a composition bias toward basic residues; that stretch reads KERKKPGLKGARRAPQFSKR.

It belongs to the universal ribosomal protein uS9 family.

In Listeria monocytogenes serovar 1/2a (strain ATCC BAA-679 / EGD-e), this protein is Small ribosomal subunit protein uS9.